A 534-amino-acid chain; its full sequence is Prolyl 4-hydroxylase subunit alpha-1 (534 aa).

The signal sequence occupies residues 1-17 (MIWYILIIGILLPQSLA). N113 is a glycosylation site (N-linked (GlcNAc...) asparagine). The stretch at 205–238 (VSVLDYLSYAVYQQGDLDKALLLTKKLLELDPEH) is one TPR repeat. The N-linked (GlcNAc...) asparagine glycan is linked to N259. The Fe2OG dioxygenase domain occupies 411–519 (TAEELQVANY…KWVSNKWLHE (109 aa)). Fe cation-binding residues include H429, D431, and H500. Position 510 (K510) interacts with 2-oxoglutarate.

The protein belongs to the P4HA family. Heterotetramer of two alpha-1 chains and two beta chains (P4HB)(the beta chain is the multi-functional PDI), where P4HB plays the role of a structural subunit; this tetramer catalyzes the formation of 4-hydroxyproline in collagen. Requires Fe(2+) as cofactor. L-ascorbate serves as cofactor. As to expression, expressed in the heart, liver, skeletal muscle, kidney, placenta, lung and pancreas.

The protein localises to the endoplasmic reticulum lumen. It catalyses the reaction L-prolyl-[collagen] + 2-oxoglutarate + O2 = trans-4-hydroxy-L-prolyl-[collagen] + succinate + CO2. Its activity is regulated as follows. Inhibited by poly(L-proline). In terms of biological role, catalyzes the post-translational formation of 4-hydroxyproline in -Xaa-Pro-Gly- sequences in collagens and other proteins. In Homo sapiens (Human), this protein is Prolyl 4-hydroxylase subunit alpha-1 (P4HA1).